The primary structure comprises 647 residues: UvrABC system protein C (647 aa).

In terms of domain architecture, GIY-YIG spans 16–95 (VEPGVYRFRD…IKEFDPRFNI (80 aa)). In terms of domain architecture, UVR spans 208-243 (DRYARDLERKMSAAAEQLDFERAARLRDDLFALKRA).

This sequence belongs to the UvrC family. In terms of assembly, interacts with UvrB in an incision complex.

Its subcellular location is the cytoplasm. Functionally, the UvrABC repair system catalyzes the recognition and processing of DNA lesions. UvrC both incises the 5' and 3' sides of the lesion. The N-terminal half is responsible for the 3' incision and the C-terminal half is responsible for the 5' incision. The polypeptide is UvrABC system protein C (Mycobacterium leprae (strain Br4923)).